The sequence spans 125 residues: Prefoldin subunit beta (125 aa).

The protein belongs to the prefoldin subunit beta family. As to quaternary structure, heterohexamer of two alpha and four beta subunits.

The protein localises to the cytoplasm. Molecular chaperone capable of stabilizing a range of proteins. Seems to fulfill an ATP-independent, HSP70-like function in archaeal de novo protein folding. The sequence is that of Prefoldin subunit beta from Pyrobaculum islandicum (strain DSM 4184 / JCM 9189 / GEO3).